Consider the following 722-residue polypeptide: DUF724 domain-containing protein 7 (722 aa).

A disordered region spans residues 424–449 (KTTPKKKLQAMKNQKSSTNDSVGEKV). A compositionally biased stretch (polar residues) spans 434–444 (MKNQKSSTNDS). Positions 540 to 720 (VLPFVKKSQL…HEFQAILAAP (181 aa)) constitute a DUF724 domain. A coiled-coil region spans residues 645 to 712 (CALEELKAVE…DQEVQNVDHE (68 aa)).

Homodimer. Interacts wtih ABAP1, ARIA and LHP1. Interacts with the non-modified histones H1, H2B, H3 and H4. Expressed in roots, leaves, stems and flowers.

Its subcellular location is the nucleus. In terms of biological role, may act as a link between DNA replication, transcription and chromatin remodeling during flower development. May participate in the repression of LHP1-targeted genes during flower development by direct interaction with LHP1. May be involved in the polar growth of plant cells via transportation of RNAs. This is DUF724 domain-containing protein 7 from Arabidopsis thaliana (Mouse-ear cress).